Here is a 243-residue protein sequence, read N- to C-terminus: 1-(5-phosphoribosyl)-5-[(5-phosphoribosylamino)methylideneamino] imidazole-4-carboxamide isomerase (243 aa).

The active-site Proton acceptor is the Asp8. The Proton donor role is filled by Asp130.

This sequence belongs to the HisA/HisF family.

It localises to the cytoplasm. It catalyses the reaction 1-(5-phospho-beta-D-ribosyl)-5-[(5-phospho-beta-D-ribosylamino)methylideneamino]imidazole-4-carboxamide = 5-[(5-phospho-1-deoxy-D-ribulos-1-ylimino)methylamino]-1-(5-phospho-beta-D-ribosyl)imidazole-4-carboxamide. Its pathway is amino-acid biosynthesis; L-histidine biosynthesis; L-histidine from 5-phospho-alpha-D-ribose 1-diphosphate: step 4/9. This is 1-(5-phosphoribosyl)-5-[(5-phosphoribosylamino)methylideneamino] imidazole-4-carboxamide isomerase from Acinetobacter baumannii (strain SDF).